We begin with the raw amino-acid sequence, 458 residues long: Pentatricopeptide repeat-containing protein At1g77405 (458 aa).

7 PPR repeats span residues 164–198 (TTAS…HCKP), 199–233 (DVYA…GFRY), 236–271 (DTYT…NRMF), 282–316 (DVVT…GCVP), 317–351 (NQVT…GHGV), 353–387 (GSST…GLVP), and 388–419 (REYT…MREG).

This sequence belongs to the PPR family. P subfamily.

This Arabidopsis thaliana (Mouse-ear cress) protein is Pentatricopeptide repeat-containing protein At1g77405.